Here is a 332-residue protein sequence, read N- to C-terminus: Protein pelota homolog (332 aa).

This sequence belongs to the eukaryotic release factor 1 family. Pelota subfamily. As to quaternary structure, monomer. The cofactor is a divalent metal cation.

Its subcellular location is the cytoplasm. Functionally, may function in recognizing stalled ribosomes, interact with stem-loop structures in stalled mRNA molecules, and effect endonucleolytic cleavage of the mRNA. May play a role in the release non-functional ribosomes and degradation of damaged mRNAs. Has endoribonuclease activity. The polypeptide is Protein pelota homolog (Pyrobaculum aerophilum (strain ATCC 51768 / DSM 7523 / JCM 9630 / CIP 104966 / NBRC 100827 / IM2)).